Consider the following 204-residue polypeptide: Putative 3-methyladenine DNA glycosylase (204 aa).

This sequence belongs to the DNA glycosylase MPG family.

The chain is Putative 3-methyladenine DNA glycosylase from Mycobacterium sp. (strain KMS).